Here is a 741-residue protein sequence, read N- to C-terminus: Phosphoribosylformylglycinamidine synthase subunit PurL (741 aa).

Histidine 54 is a catalytic residue. The ATP site is built by tyrosine 57 and lysine 96. Residue glutamate 98 participates in Mg(2+) binding. Substrate is bound by residues 99–102 (SHNH) and arginine 121. The active-site Proton acceptor is histidine 100. A Mg(2+)-binding site is contributed by aspartate 122. Glutamine 245 contacts substrate. Residue aspartate 273 participates in Mg(2+) binding. 317–319 (ESQ) is a binding site for substrate. The ATP site is built by aspartate 500 and glycine 537. Residue asparagine 538 participates in Mg(2+) binding. Serine 540 contacts substrate.

This sequence belongs to the FGAMS family. Monomer. Part of the FGAM synthase complex composed of 1 PurL, 1 PurQ and 2 PurS subunits.

The protein resides in the cytoplasm. It catalyses the reaction N(2)-formyl-N(1)-(5-phospho-beta-D-ribosyl)glycinamide + L-glutamine + ATP + H2O = 2-formamido-N(1)-(5-O-phospho-beta-D-ribosyl)acetamidine + L-glutamate + ADP + phosphate + H(+). The protein operates within purine metabolism; IMP biosynthesis via de novo pathway; 5-amino-1-(5-phospho-D-ribosyl)imidazole from N(2)-formyl-N(1)-(5-phospho-D-ribosyl)glycinamide: step 1/2. In terms of biological role, part of the phosphoribosylformylglycinamidine synthase complex involved in the purines biosynthetic pathway. Catalyzes the ATP-dependent conversion of formylglycinamide ribonucleotide (FGAR) and glutamine to yield formylglycinamidine ribonucleotide (FGAM) and glutamate. The FGAM synthase complex is composed of three subunits. PurQ produces an ammonia molecule by converting glutamine to glutamate. PurL transfers the ammonia molecule to FGAR to form FGAM in an ATP-dependent manner. PurS interacts with PurQ and PurL and is thought to assist in the transfer of the ammonia molecule from PurQ to PurL. In Shouchella clausii (strain KSM-K16) (Alkalihalobacillus clausii), this protein is Phosphoribosylformylglycinamidine synthase subunit PurL.